The chain runs to 357 residues: Putative DNA directed RNA polymerase subunit R470 (357 aa).

The protein belongs to the archaeal Rpo11/eukaryotic RPB11/RPC19 RNA polymerase subunit family.

It localises to the virion. It catalyses the reaction RNA(n) + a ribonucleoside 5'-triphosphate = RNA(n+1) + diphosphate. This Acanthamoeba polyphaga mimivirus (APMV) protein is Putative DNA directed RNA polymerase subunit R470.